Consider the following 446-residue polypeptide: UDP-N-acetylmuramoylalanine--D-glutamate ligase (446 aa).

115-121 (GTNGKTT) contributes to the ATP binding site.

This sequence belongs to the MurCDEF family.

The protein resides in the cytoplasm. The catalysed reaction is UDP-N-acetyl-alpha-D-muramoyl-L-alanine + D-glutamate + ATP = UDP-N-acetyl-alpha-D-muramoyl-L-alanyl-D-glutamate + ADP + phosphate + H(+). It participates in cell wall biogenesis; peptidoglycan biosynthesis. Its function is as follows. Cell wall formation. Catalyzes the addition of glutamate to the nucleotide precursor UDP-N-acetylmuramoyl-L-alanine (UMA). The chain is UDP-N-acetylmuramoylalanine--D-glutamate ligase from Pelobacter propionicus (strain DSM 2379 / NBRC 103807 / OttBd1).